The sequence spans 211 residues: Protoglabretal synthase MOI1 (211 aa).

5 consecutive transmembrane segments (helical) span residues 16-36 (ASLH…TWII), 50-70 (LICW…YYVF), 104-124 (VLGI…LAAY), 135-155 (IFQF…FLTA), and 179-199 (IWVI…HAIC). One can recognise an EXPERA domain in the interval 46 to 188 (IERLLICWWA…IWVIVPMLIA (143 aa)).

The protein belongs to the EBP family. In terms of tissue distribution, expressed in maturing fruits and in juice vesicles.

The protein resides in the membrane. It catalyses the reaction 7,8-epoxymelianol = protoglabretal. The protein operates within secondary metabolite biosynthesis; terpenoid biosynthesis. In terms of biological role, isomerase involved in the biosynthesis of glabretanes triterpene natural products such as glabretal, a component with in vitro antiproliferative properties on lymphocytes. Catalyzes the conversion of 7,8-epoxymelianol to protoglabretal via skeletal rearrangements. This chain is Protoglabretal synthase MOI1, found in Citrus sinensis (Sweet orange).